The sequence spans 95 residues: Ribosome-binding factor A (95 aa).

Belongs to the RbfA family. As to quaternary structure, interacts with the 30S ribosomal subunit as a monomer, binding in a position overlapping the sites of the A and P site tRNAs, and displacing segments of the 16S rRNA. Probably contacts 16S rRNA and ribosomal protein S9 and S13.

It is found in the cytoplasm. Functionally, one of several proteins that assist in the late maturation steps of the functional core of the 30S ribosomal subunit. Associates with free 30S ribosomal subunits (but not with 30S subunits that are part of 70S ribosomes or polysomes). Required for efficient processing of 16S rRNA. Probably interacts with the 5'-terminal helix region of 16S rRNA, bringing together different domains of the 30S ribosomal subunit which aids assembly. The protein is Ribosome-binding factor A of Thermus thermophilus (strain ATCC 27634 / DSM 579 / HB8).